Consider the following 260-residue polypeptide: DNA repair protein RecO (260 aa).

Belongs to the RecO family.

Involved in DNA repair and RecF pathway recombination. This chain is DNA repair protein RecO, found in Streptococcus suis (strain 98HAH33).